Reading from the N-terminus, the 365-residue chain is PHD finger protein 6 (365 aa).

The residue at position 2 (S2) is an N-acetylserine. Short sequence motifs (nuclear localization signal) lie at residues 13–16 (RQRK) and 129–133 (RKHKK). The C2HC pre-PHD-type 1 zinc-finger motif lies at 14 to 52 (QRKCGFCKSNRDKECGQLLISENQKVAAHHKCMLFSSAL). The interval 14–132 (QRKCGFCKSN…IYMVYCRKHK (119 aa)) is extended PHD1 domain (ePHD1). The segment at 80 to 132 (LMCSLCHCPGATIGCDVKTCHRTYHYHCALHDKAQIREKPSQGIYMVYCRKHK) adopts a PHD-type 1 zinc-finger fold. S138, S145, and S155 each carry phosphoserine. The segment at 139-211 (EADLEESFNE…RSSPSDTRPK (73 aa)) is disordered. Residues 157 to 169 (KSKKKSRKGRPRK) carry the Nucleolar localization signal motif. The span at 157 to 171 (KSKKKSRKGRPRKTN) shows a compositional bias: basic residues. K173 is covalently cross-linked (Glycyl lysine isopeptide (Lys-Gly) (interchain with G-Cter in SUMO2)). A phosphoserine mark is found at S183 and S199. The C2HC pre-PHD-type 2 zinc-finger motif lies at 209–249 (RPKCGFCHVGEEENEARGKLHIFNAKKAAAHYKCMLFSSGT). An extended PHD2 domain (ePHD2) region spans residues 209 to 330 (RPKCGFCHVG…IYKLYCKNHS (122 aa)). K227 is covalently cross-linked (Glycyl lysine isopeptide (Lys-Gly) (interchain with G-Cter in SUMO2)). Residues 278–330 (MKCTLCSQPGATIGCEIKACVKTYHYHCGVQDKAKYIENMSRGIYKLYCKNHS) form a PHD-type 2 zinc finger. The segment at 330–365 (SGNDERDEEDEERESKSRGKVEIDQQQLTQQQLNGN) is disordered. The segment covering 342–352 (RESKSRGKVEI) has biased composition (basic and acidic residues). The segment covering 354-365 (QQQLTQQQLNGN) has biased composition (low complexity). T358 is subject to Phosphothreonine.

As to quaternary structure, interacts with UBTF. Interacts with the NuRD complex component RBBP4 (via the nucleolar localization motif), the interaction mediates transcriptional repression activity.

It is found in the nucleus. It localises to the nucleolus. The protein localises to the chromosome. Its subcellular location is the centromere. The protein resides in the kinetochore. Transcriptional regulator that associates with ribosomal RNA promoters and suppresses ribosomal RNA (rRNA) transcription. This Pongo abelii (Sumatran orangutan) protein is PHD finger protein 6 (PHF6).